The following is a 497-amino-acid chain: MTDLVPVYYAFAGVVAALLFYKWQSDPLRAIPTIGPSAPLLSYLGAIRFFKDASGVLQEGYDKYNVFKVAMIDRWAVVVSGAKMNEELRSIPDDQMSFMDAADELVQTKYTIAPDVLIHPIHITVIKEQLTRNLAPLFHEVVKEVEAAMQELIPAKGDDWIEIDGYSTVTQIITRASSRVFVGFPLCQNAEYLRIATTYSAEVMKGAMIMSVLPDFLKHIVGPLLPWSRRALRRAAPFLLPIITERRRLLKEYGRDWEDKPNDLLMWIIEEARRVGREDSTDLMVQGIMASNFTAIHTSSLTFTHALYHLAANPEYIQSLREEIEEVIRTDGWTKVSMGSMWKLDSFLKESHRVNGISGISVMRLALKDVTFSDGTFIPAGTFVAAAATSTHHDEENYSDATVFKPFRFSDMRASESEKNKHHYVSTSAEYIGFGHGKHACPGRFFAANELKIMLASIVLNYDVKFEDEGKRPANVWFATTVLPAPGAKVMFRKRQT.

The helical transmembrane segment at 1-21 threads the bilayer; it reads MTDLVPVYYAFAGVVAALLFY. Residues asparagine 292 and asparagine 397 are each glycosylated (N-linked (GlcNAc...) asparagine). Cysteine 441 is a binding site for heme.

It belongs to the cytochrome P450 family. The cofactor is heme.

The protein resides in the membrane. Its pathway is secondary metabolite biosynthesis. Functionally, cytochrome P450 monooxygenase that is able to use dehydroabietic acid and testosterone as substrates for oxidation, suggesting that the natural substrate(s) may be structurally related to steroid compounds. The protein is Cytochrome P450 monooxygenase 151 of Postia placenta (strain ATCC 44394 / Madison 698-R) (Brown rot fungus).